The chain runs to 215 residues: UPF0502 protein YceH (215 aa).

Lys80 carries the N6-acetyllysine modification.

Belongs to the UPF0502 family.

The polypeptide is UPF0502 protein YceH (Escherichia coli O45:K1 (strain S88 / ExPEC)).